Here is a 241-residue protein sequence, read N- to C-terminus: Eukaryotic translation initiation factor 6 (241 aa).

The protein belongs to the eIF-6 family. As to quaternary structure, monomer. Associates with the 60S ribosomal subunit.

The protein resides in the cytoplasm. It is found in the nucleus. It localises to the nucleolus. Its function is as follows. Binds to the 60S ribosomal subunit and prevents its association with the 40S ribosomal subunit to form the 80S initiation complex in the cytoplasm. Is also involved in ribosome biogenesis. Associates with pre-60S subunits in the nucleus and is involved in its nuclear export. The chain is Eukaryotic translation initiation factor 6 from Encephalitozoon cuniculi (strain GB-M1) (Microsporidian parasite).